The following is a 256-amino-acid chain: EF-hand calcium-binding domain-containing protein 4A (256 aa).

Residues 1–10 (MAHLGSRRRM) show a composition bias toward basic residues. The interval 1 to 32 (MAHLGSRRRMSPGLRTRIAHRKAHRTPPSPLI) is disordered. EF-hand domains are found at residues 41-69 (KAHE…QNEL) and 71-106 (LTPE…LLGV). Residues aspartate 84, serine 86, asparagine 88, tyrosine 90, and glutamate 95 each contribute to the Ca(2+) site. A coiled-coil region spans residues 190 to 235 (IRDVHHEKDTLEQALKRKETDHGREVRCLYEEMEQQIKIERERLLK).

The protein belongs to the EFCAB4 family.

The chain is EF-hand calcium-binding domain-containing protein 4A (cracr2b) from Xenopus tropicalis (Western clawed frog).